The sequence spans 361 residues: D-alanine--D-alanine ligase (361 aa).

The region spanning 134-344 is the ATP-grasp domain; sequence KLLLKSFNIP…FKDLIDNLID (211 aa). 167–222 contacts ATP; sequence KEVLGYPVIVKPAVLGSSIGINVAYSENQIESCIEEALKYDLTIVIEKFIEAREIE. Mg(2+) is bound by residues D297, E311, and N313.

The protein belongs to the D-alanine--D-alanine ligase family. Mg(2+) serves as cofactor. The cofactor is Mn(2+).

Its subcellular location is the cytoplasm. The enzyme catalyses 2 D-alanine + ATP = D-alanyl-D-alanine + ADP + phosphate + H(+). Its pathway is cell wall biogenesis; peptidoglycan biosynthesis. In terms of biological role, cell wall formation. The polypeptide is D-alanine--D-alanine ligase (Borreliella afzelii (strain PKo) (Borrelia afzelii)).